Here is a 437-residue protein sequence, read N- to C-terminus: Immunoglobulin superfamily member 11 (437 aa).

An N-terminal signal peptide occupies residues 1–22; it reads MTCRGSPLAPLLLFSLHGVAAS. The Ig-like V-type domain occupies 23–136; sequence LEVSESPGSV…DRGGRNIGVT (114 aa). Over 23–241 the chain is Extracellular; the sequence is LEVSESPGSV…VISPQPRSIG (219 aa). Disulfide bonds link Cys44–Cys120 and Cys165–Cys215. A glycan (N-linked (GlcNAc...) asparagine) is linked at Asn102. Residues 144 to 234 form the Ig-like C2-type domain; the sequence is PSAPHCQIQG…TCLLDLQVIS (91 aa). A helical membrane pass occupies residues 242–262; that stretch reads LIAGAIGTGAVIIIFCIALIL. Residues 263–437 lie on the Cytoplasmic side of the membrane; that stretch reads GAFFYWRSKN…PAQSRAGSLV (175 aa). The residue at position 379 (Arg379) is an Omega-N-methylarginine. Positions 382-405 are disordered; the sequence is SLPAVSRSNGSVSRKARPPPVPSL.

N-glycosylated.

It is found in the cell membrane. Its function is as follows. Functions as a cell adhesion molecule through homophilic interaction. Stimulates cell growth. The chain is Immunoglobulin superfamily member 11 (IGSF11) from Bos taurus (Bovine).